A 1047-amino-acid polypeptide reads, in one-letter code: Rab11 family-interacting protein 3 (1047 aa).

3 disordered regions span residues 1–107 (MELC…WPQE), 311–335 (SHSC…DVSH), and 475–496 (PGPP…TAQE). A compositionally biased stretch (basic and acidic residues) spans 64-73 (EPHAPSRWAK). 2 consecutive EF-hand domains span residues 496–531 (EEGA…YGAE) and 528–563 (YGAE…IRNG). Residues Asp509, Asp511, Asp513, Asp520, Asp541, Ser543, and Asp552 each contribute to the Ca(2+) site. Phosphoserine is present on residues Ser641, Ser765, and Ser829. Positions 750–985 (EEDIADKVIF…NGQIITLSIQ (236 aa)) form a coiled coil. The segment at 775–879 (GEQHGRLRQE…MLDEIEELTQ (105 aa)) is ARF-binding domain (ABD). Residues 882–906 (SEEQENKRKMGDRLSHERHQFQRDK) are disordered. Ser938 and Ser939 each carry phosphoserine. The region spanning 985 to 1047 (QGAKSLFSTS…ETNPSILEVK (63 aa)) is the FIP-RBD domain.

In terms of assembly, homodimer. Interacts with RAB11A; the interaction is direct and is required for the recruitment to endosomes. Interacts with RAB11B. Forms a ternary complex with RAB11A and dynein intermediate chain DYNC1LI1; RAB11FIP3 links RAB11A to dynein and the interaction regulates endocytic trafficking. Interacts with dynein intermediate chain and dynactin (DCTN1); the interaction activates dynein processivity. Interacts with ARF6 and EXOC7; the interaction serves for recruitment and tethering of recycling endosomes-derived vesicles to the cleavage furrow/midbody. Interacts with RACGAP1/MgcRacGAP; the interaction occurs at late telophase and is required for recruitment and tethering of recycling endosomes-derived vesicles to the cleavage furrow/midbody. Forms a complex with RAB11A and Rabin8/RAB3IP, probably a heterohexamer with two of each protein subunit, where RAB3IP and RAB11FIP3 simultaneously bind to RAB11A; the complex promotes preciliary trafficking. Forms a complex containing RAB11A, ASAP1, RAB3IP, RAP11FIP3 and ARF4; the complex promotes preciliary trafficking; the complex binds to RHO in photoreceptor cells and promotes RHO ciliary transport. Interacts with RAB11FIP4. Interacts with RAB25.

The protein resides in the recycling endosome membrane. Its subcellular location is the cytoplasm. The protein localises to the cytoskeleton. It localises to the microtubule organizing center. It is found in the centrosome. The protein resides in the cleavage furrow. Its subcellular location is the midbody. The protein localises to the golgi apparatus membrane. It localises to the golgi apparatus. It is found in the trans-Golgi network membrane. In terms of biological role, downstream effector molecule for Rab11 GTPase which is involved in endocytic trafficking, cytokinesis and intracellular ciliogenesis by participating in membrane delivery. Recruited by Rab11 to endosomes where it links Rab11 to dynein motor complex. The functional Rab11-RAB11FIP3-dynein complex regulates the movement of peripheral sorting endosomes (SE) along microtubule tracks toward the microtubule organizing center/centrosome, generating the endocytic recycling compartment (ERC) during interphase of cell cycle. Facilitates the interaction between dynein and dynactin and activates dynein processivity. Binding with ASAP1 is needed to regulate the pericentrosomal localization of recycling endosomes. The Rab11-RAB11FIP3 complex is also implicated in the transport during telophase of vesicles derived from recycling endosomes to the cleavage furrow via centrosome-anchored microtubules, where the vesicles function to deliver membrane during late cytokinesis and abscission. The recruitment of Rab11-RAB11FIP3-containing endosomes to the cleavage furrow and tethering to the midbody is co-mediated by RAB11FIP3 interaction with ARF6-exocyst and RACGAP1-MKLP1 tethering complexes. Also involved in the Rab11-Rabin8-Rab8 ciliogenesis cascade by facilitating the orderly assembly of a ciliary targeting complex containing Rab11, ASAP1, Rabin8/RAB3IP, RAB11FIP3 and ARF4, which directs preciliary vesicle trafficking to mother centriole and ciliogenesis initiation. Also promotes the activity of Rab11 and ASAP1 in the ARF4-dependent Golgi-to-cilia transport of the sensory receptor rhodopsin. Competes with WDR44 for binding to Rab11, which controls intracellular ciliogenesis pathway. May play a role in breast cancer cell motility by regulating actin cytoskeleton. This chain is Rab11 family-interacting protein 3, found in Mus musculus (Mouse).